A 233-amino-acid chain; its full sequence is Adenosylcobinamide-GDP ribazoletransferase (233 aa).

7 helical membrane-spanning segments follow: residues 24 to 44, 46 to 66, 96 to 116, 117 to 137, 158 to 178, 181 to 198, and 209 to 229; these read LWAL…VLYL, LPLS…LLHL, IAGV…LPLL, PFYA…LALA, QLTL…YIEP, ISSL…RLSL, and IGAV…VVWV.

Belongs to the CobS family. Requires Mg(2+) as cofactor.

The protein localises to the cell membrane. The catalysed reaction is alpha-ribazole + adenosylcob(III)inamide-GDP = adenosylcob(III)alamin + GMP + H(+). It carries out the reaction alpha-ribazole 5'-phosphate + adenosylcob(III)inamide-GDP = adenosylcob(III)alamin 5'-phosphate + GMP + H(+). Its pathway is cofactor biosynthesis; adenosylcobalamin biosynthesis; adenosylcobalamin from cob(II)yrinate a,c-diamide: step 7/7. In terms of biological role, joins adenosylcobinamide-GDP and alpha-ribazole to generate adenosylcobalamin (Ado-cobalamin). Also synthesizes adenosylcobalamin 5'-phosphate from adenosylcobinamide-GDP and alpha-ribazole 5'-phosphate. In Thermococcus gammatolerans (strain DSM 15229 / JCM 11827 / EJ3), this protein is Adenosylcobinamide-GDP ribazoletransferase.